The primary structure comprises 419 residues: UDP-N-acetylglucosamine 1-carboxyvinyltransferase (419 aa).

22–23 (KN) is a phosphoenolpyruvate binding site. Arginine 91 lines the UDP-N-acetyl-alpha-D-glucosamine pocket. The Proton donor role is filled by cysteine 115. Cysteine 115 is modified (2-(S-cysteinyl)pyruvic acid O-phosphothioketal). UDP-N-acetyl-alpha-D-glucosamine contacts are provided by residues 120 to 124 (RPVDL), 160 to 163 (KVSV), aspartate 305, and valine 327.

It belongs to the EPSP synthase family. MurA subfamily.

The protein resides in the cytoplasm. The catalysed reaction is phosphoenolpyruvate + UDP-N-acetyl-alpha-D-glucosamine = UDP-N-acetyl-3-O-(1-carboxyvinyl)-alpha-D-glucosamine + phosphate. It participates in cell wall biogenesis; peptidoglycan biosynthesis. Its function is as follows. Cell wall formation. Adds enolpyruvyl to UDP-N-acetylglucosamine. This Escherichia coli O157:H7 protein is UDP-N-acetylglucosamine 1-carboxyvinyltransferase.